The primary structure comprises 579 residues: MEQQQQQQLPSTTTRPKPKLLNRLNTYVGSSRVGKRFKLAERNSTFTTELRAGTATFLTMAYILAVNASILSDSGGTCSVSDCIPLCSNPAIEPSQCTGPGLRLIQPDVSCKFNPVNPGYAACVEEIRKDLIVATVAASLIGCVIMGLMANLPLALAPGMGTNAYFAYTVVGFHGSGSISYRTALAAVFIEGLIFLFISAIGFRAKLAKLVPKPVRISSSAGIGLFLAFIGLQNNQGIGLVGYSPSTLVTLAACPASSRISLAPVITSANGTVSLLAGGSVSGDIMCIHGRMESPTFWLGIVGFVIIAYCLVKNVKGAMIYGIVFVTAVSWFRNTEVTAFPNTSAGDAAHDYFKKIVDVHVIKHTAGALSFSGINKGHFWEALVTFLYVDILDTTGTLYSMARFAGFVDEKGDFAGQYFAFMSDASAIVIGSLLGTSPVTVFIESSTGIREGGRTGLTAITVAVYFLLAMFFTPLLASIPAWAVGPPLILVGVMMMKSVTEIDWEDMREAIPAFVTMILMPLTYSVAYGLIGGIGSYVVLHLWDWGEEGLVKLGFLKRKVKEEDNNNGVVKASEIDTTV.

12 consecutive transmembrane segments (helical) span residues 52–72 (AGTATFLTMAYILAVNASILS), 131–151 (LIVATVAASLIGCVIMGLMAN), 183–203 (TALAAVFIEGLIFLFISAIGF), 221–241 (AGIGLFLAFIGLQNNQGIGLV), 260–280 (ISLAPVITSANGTVSLLAGGS), 292–312 (MESPTFWLGIVGFVIIAYCLV), 320–340 (IYGIVFVTAVSWFRNTEVTAF), 379–399 (FWEALVTFLYVDILDTTGTLY), 414–434 (FAGQYFAFMSDASAIVIGSLL), 459–479 (AITVAVYFLLAMFFTPLLASI), 480–500 (PAWAVGPPLILVGVMMMKSVT), and 514–534 (FVTMILMPLTYSVAYGLIGGI).

Belongs to the nucleobase:cation symporter-2 (NCS2) (TC 2.A.40) family. Azg-like subfamily.

The protein localises to the membrane. Its function is as follows. Transports natural purines (adenine and guanine) as well as purine analogs. Confers sensitivity to 8-azaadenine and 8-azaguanine (8-azg). In Arabidopsis thaliana (Mouse-ear cress), this protein is Adenine/guanine permease AZG1 (AZG1).